The following is a 311-amino-acid chain: Probable lipid kinase YegS-like (311 aa).

The DAGKc domain maps to 9–140 (EHDGDTWLIL…VDVGTLGDDY (132 aa)). ATP contacts are provided by residues Thr47, 73–79 (GDGTVNE), and Ser102. Residues Lys221, Asp224, and Leu226 each contribute to the Mg(2+) site. Catalysis depends on Glu281, which acts as the Proton acceptor.

This sequence belongs to the diacylglycerol/lipid kinase family. YegS lipid kinase subfamily. It depends on Mg(2+) as a cofactor. The cofactor is Ca(2+).

Its subcellular location is the cytoplasm. Probably phosphorylates lipids; the in vivo substrate is unknown. The polypeptide is Probable lipid kinase YegS-like (Chromohalobacter salexigens (strain ATCC BAA-138 / DSM 3043 / CIP 106854 / NCIMB 13768 / 1H11)).